A 434-amino-acid chain; its full sequence is MKLFGSSGIRGIVNKEVTPELALQVGLVLGSRKKTAVIGRDPRVSAPMIEHALVAGLTAAGCDVTKVGMVTTPTLAYAAREYECGVMVTASHNPSEYVGIKLWNPDGMAFDSAQQEEIEDAIENENFLRVTWDLIGKVAENGNAIRDHMDLIEGLVRDSKLRVVLDCGCGAGSTITPYLLQELGCQVITLNSQPDGHFPARNPEPNDQNLSLLKKAVVAFEADFGIAHDGDADRMMAVDEKGNFVSGDELLAIFGRFECGDEKGTVVVPVDTSMMVDDYLEGSEIIRTRVGDVYVAEGIKQYGAIYGGEPSGSWIFPKISYCPDGIYAAAKLVEIVREKKLSELRAELPVYATKRGAFPCANEKKAELMEKVKTKLEPLGKVLDIDGIRVELENGWVLVRPSGTEAKVRITAEAREKVDEIYEMAEKIVKEALK.

Catalysis depends on serine 91, which acts as the Phosphoserine intermediate. Residues serine 91, aspartate 229, aspartate 231, and aspartate 233 each coordinate Mg(2+). Position 91 is a phosphoserine (serine 91).

Belongs to the phosphohexose mutase family. Mg(2+) is required as a cofactor. Post-translationally, activated by phosphorylation.

It catalyses the reaction alpha-D-glucosamine 1-phosphate = D-glucosamine 6-phosphate. In terms of biological role, catalyzes the conversion of glucosamine-6-phosphate to glucosamine-1-phosphate. In Methanosarcina acetivorans (strain ATCC 35395 / DSM 2834 / JCM 12185 / C2A), this protein is Probable phosphoglucosamine mutase.